The sequence spans 155 residues: Molybdopterin synthase catalytic subunit (155 aa).

Substrate contacts are provided by residues 109-110, Lys125, and 132-134; these read HR and KKE.

The protein belongs to the MoaE family. MOCS2B subfamily. Heterotetramer; composed of 2 small (MOCS2A) and 2 large (MOCS2B) subunits.

It localises to the cytoplasm. Its subcellular location is the cytosol. The catalysed reaction is 2 [molybdopterin-synthase sulfur-carrier protein]-C-terminal-Gly-aminoethanethioate + cyclic pyranopterin phosphate + H2O = molybdopterin + 2 [molybdopterin-synthase sulfur-carrier protein]-C-terminal Gly-Gly + 2 H(+). It participates in cofactor biosynthesis; molybdopterin biosynthesis. Functionally, catalytic subunit of the molybdopterin synthase complex, a complex that catalyzes the conversion of precursor Z into molybdopterin. Acts by mediating the incorporation of 2 sulfur atoms from thiocarboxylated MOCS2A into precursor Z to generate a dithiolene group. The sequence is that of Molybdopterin synthase catalytic subunit from Taeniopygia guttata (Zebra finch).